Consider the following 598-residue polypeptide: Elongation factor 4 (598 aa).

Positions lysine 4–glutamine 181 constitute a tr-type G domain. GTP contacts are provided by residues aspartate 16–threonine 21 and asparagine 128–aspartate 131.

It belongs to the TRAFAC class translation factor GTPase superfamily. Classic translation factor GTPase family. LepA subfamily.

It is found in the cell membrane. The enzyme catalyses GTP + H2O = GDP + phosphate + H(+). Its function is as follows. Required for accurate and efficient protein synthesis under certain stress conditions. May act as a fidelity factor of the translation reaction, by catalyzing a one-codon backward translocation of tRNAs on improperly translocated ribosomes. Back-translocation proceeds from a post-translocation (POST) complex to a pre-translocation (PRE) complex, thus giving elongation factor G a second chance to translocate the tRNAs correctly. Binds to ribosomes in a GTP-dependent manner. This chain is Elongation factor 4, found in Mesomycoplasma hyopneumoniae (strain 232) (Mycoplasma hyopneumoniae).